The sequence spans 73 residues: uncharacterized protein (73 aa).

Residues 48 to 73 (AKEPEKKTPSMEAKATSLSPNKASAS) are disordered. The span at 63-73 (TSLSPNKASAS) shows a compositional bias: polar residues.

This is an uncharacterized protein from Saccharomyces cerevisiae (strain ATCC 204508 / S288c) (Baker's yeast).